Here is a 300-residue protein sequence, read N- to C-terminus: NAD kinase (300 aa).

Aspartate 75 acts as the Proton acceptor in catalysis. Residues 75 to 76 (DG), 149 to 150 (ND), arginine 177, aspartate 179, 190 to 195 (TAYALS), alanine 214, and glutamine 248 each bind NAD(+).

It belongs to the NAD kinase family. Requires a divalent metal cation as cofactor.

It localises to the cytoplasm. The enzyme catalyses NAD(+) + ATP = ADP + NADP(+) + H(+). In terms of biological role, involved in the regulation of the intracellular balance of NAD and NADP, and is a key enzyme in the biosynthesis of NADP. Catalyzes specifically the phosphorylation on 2'-hydroxyl of the adenosine moiety of NAD to yield NADP. In Burkholderia pseudomallei (strain K96243), this protein is NAD kinase.